Reading from the N-terminus, the 174-residue chain is Large ribosomal subunit protein uL6 (174 aa).

This sequence belongs to the universal ribosomal protein uL6 family. Part of the 50S ribosomal subunit.

Functionally, this protein binds to the 23S rRNA, and is important in its secondary structure. It is located near the subunit interface in the base of the L7/L12 stalk, and near the tRNA binding site of the peptidyltransferase center. The sequence is that of Large ribosomal subunit protein uL6 from Acidithiobacillus ferrooxidans (strain ATCC 23270 / DSM 14882 / CIP 104768 / NCIMB 8455) (Ferrobacillus ferrooxidans (strain ATCC 23270)).